The primary structure comprises 411 residues: GPI-anchor transamidase (411 aa).

The N-terminal stretch at 1-22 (MRIAMHLPLLLLYIFLLPLSGA) is a signal peptide. At 23–376 (NNTDAAHEVI…DIDSNECFFT (354 aa)) the chain is on the lumenal side. Active-site residues include His157 and Cys199. N-linked (GlcNAc...) asparagine glycans are attached at residues Asn256 and Asn346. A helical transmembrane segment spans residues 377–397 (SFKQSATIILALIVTILWFML). Over 398–411 (RGNTAKATYDLYTN) the chain is Cytoplasmic.

The protein belongs to the peptidase C13 family. As to quaternary structure, forms a complex with CDC91, GPI16, GPI17 and GAA1. The disulfide bond between GPI8 and GPI16 is important for normal enzyme activity.

The protein resides in the endoplasmic reticulum membrane. It functions in the pathway glycolipid biosynthesis; glycosylphosphatidylinositol-anchor biosynthesis. Functionally, mediates GPI anchoring in the endoplasmic reticulum, by replacing a protein's C-terminal GPI attachment signal peptide with a pre-assembled GPI. During this transamidation reaction, the GPI transamidase forms a carbonyl intermediate with the substrate protein. This chain is GPI-anchor transamidase (GPI8), found in Saccharomyces cerevisiae (strain ATCC 204508 / S288c) (Baker's yeast).